The chain runs to 934 residues: Pesticidal crystal protein Cry1Aa (934 aa).

Belongs to the delta endotoxin family.

Its function is as follows. Promotes colloidosmotic lysis by binding to the midgut epithelial cells of many lepidopteran larvae. The polypeptide is Pesticidal crystal protein Cry1Aa (cry1Aa) (Bacillus thuringiensis subsp. sotto).